A 331-amino-acid polypeptide reads, in one-letter code: DNA double-strand break repair nuclease NurA (331 aa).

D56 and D131 together coordinate Mn(2+).

Belongs to the NurA family. As to quaternary structure, homodimer. Interacts with SSB. Requires Mn(2+) as cofactor.

With respect to regulation, the 5'-3' ssDNA and dsDNA exonuclease and ssDNA endonuclease activities are inhibited by SSB (single-stranded DNA-binding protein). Its function is as follows. Involved in DNA double-strand break (DSB) repair. Probably acts with HerA to stimulate resection of the 5' strand and produce the long 3' single-strand that is required for RadA loading. Exhibits both single-stranded endonuclease activity and 5'-3' exonuclease activity on single-stranded and double-stranded DNA. This Sulfurisphaera tokodaii (strain DSM 16993 / JCM 10545 / NBRC 100140 / 7) (Sulfolobus tokodaii) protein is DNA double-strand break repair nuclease NurA.